A 96-amino-acid chain; its full sequence is UPF0235 protein Sputw3181_1321 (96 aa).

The protein belongs to the UPF0235 family.

The chain is UPF0235 protein Sputw3181_1321 from Shewanella sp. (strain W3-18-1).